A 101-amino-acid polypeptide reads, in one-letter code: Acylphosphatase-1 (101 aa).

S2 is modified (N-acetylserine). N-acetylalanine is present on S2. Residues 11-101 form the Acylphosphatase-like domain; that stretch reads SVDYEVFGKV…LDYSDFQIVK (91 aa). Residues R26 and N44 contribute to the active site.

Belongs to the acylphosphatase family. As to expression, organ-common type isozyme is found in many different tissues.

It catalyses the reaction an acyl phosphate + H2O = a carboxylate + phosphate + H(+). This Sus scrofa (Pig) protein is Acylphosphatase-1 (ACYP1).